We begin with the raw amino-acid sequence, 150 residues long: Avidin-related protein 2 (150 aa).

The N-terminal stretch at 1-24 (MVHATSPLLLLLLLSLALVAPSLS) is a signal peptide. In terms of domain architecture, Avidin-like spans 26-147 (RKCSLTGEWD…GNNDFTRQHT (122 aa)). Cys-28 and Cys-105 are disulfide-bonded. Asn-36, Ser-40, Tyr-57, Thr-59, and Asp-63 together coordinate biotin. N-linked (GlcNAc...) asparagine glycosylation is found at Asn-67 and Asn-93. Residues Ser-95, Ser-99, and Asn-140 each coordinate biotin.

As to quaternary structure, homotetramer. Post-translationally, glycosylated.

It is found in the secreted. Forms a strong non-covalent specific complex with biotin. In Gallus gallus (Chicken), this protein is Avidin-related protein 2 (AVR2).